The chain runs to 124 residues: Small ribosomal subunit protein uS13 (124 aa).

A disordered region spans residues 94–124; that stretch reads GLPLRGQRTKNNSRTRKGKRKTVANKKKATK. Residues 100–124 are compositionally biased toward basic residues; that stretch reads QRTKNNSRTRKGKRKTVANKKKATK.

Belongs to the universal ribosomal protein uS13 family. In terms of assembly, part of the 30S ribosomal subunit. Forms a loose heterodimer with protein S19. Forms two bridges to the 50S subunit in the 70S ribosome.

In terms of biological role, located at the top of the head of the 30S subunit, it contacts several helices of the 16S rRNA. In the 70S ribosome it contacts the 23S rRNA (bridge B1a) and protein L5 of the 50S subunit (bridge B1b), connecting the 2 subunits; these bridges are implicated in subunit movement. Contacts the tRNAs in the A and P-sites. This chain is Small ribosomal subunit protein uS13, found in Flavobacterium psychrophilum (strain ATCC 49511 / DSM 21280 / CIP 103535 / JIP02/86).